The primary structure comprises 147 residues: HETDSDGQVMNSMIEALTELQEMIVNLRYAFLTVHKARSFGSGSERLYVSNKEIKTFEPLKEICEEAGGHIPSPQLENQNKAFANVLERHNKAAYLVVGDSANFTNWAAGQPNEADGTCVKADTHGFWHSASCDEKLLVVCEFYFIL.

One can recognise a C-type lectin domain in the interval 62 to 143 (EICEEAGGHI…DEKLLVVCEF (82 aa)). Cystine bridges form between cysteine 64–cysteine 141 and cysteine 119–cysteine 133. Asparagine 103 carries an N-linked (GlcNAc...) asparagine glycan.

It belongs to the alpha-type phospholipase A2 inhibitor family. As to quaternary structure, homo- or heterotrimer; homotrimer of PLI-A chains, two PLI-A and one PLI-B chains, one PLI-A and two PLI-B chains, and homotrimer of PLI-B chains (with a ratio of 1:3:3:1). In terms of tissue distribution, expressed by the liver.

Its subcellular location is the secreted. In terms of biological role, PLI binds directly phospholipase A2 in the presence or absence of calcium. Inhibitory activity of the PLI-B homotrimer is less specific than that of the PLI-A homotrimer. The protein is Phospholipase A2 inhibitor subunit B of Protobothrops flavoviridis (Habu).